A 154-amino-acid polypeptide reads, in one-letter code: Lipoprotein signal peptidase (154 aa).

The next 2 membrane-spanning stretches (helical) occupy residues 55–75 and 85–105; these read GQFW…VIYI and AGVG…DRVF. Active-site residues include Asp111 and Asp129. A helical membrane pass occupies residues 127-147; the sequence is VADSALTVGVILLFVHMFFFA.

This sequence belongs to the peptidase A8 family.

It localises to the cell membrane. The enzyme catalyses Release of signal peptides from bacterial membrane prolipoproteins. Hydrolyzes -Xaa-Yaa-Zaa-|-(S,diacylglyceryl)Cys-, in which Xaa is hydrophobic (preferably Leu), and Yaa (Ala or Ser) and Zaa (Gly or Ala) have small, neutral side chains.. The protein operates within protein modification; lipoprotein biosynthesis (signal peptide cleavage). Functionally, this protein specifically catalyzes the removal of signal peptides from prolipoproteins. The protein is Lipoprotein signal peptidase of Geobacillus kaustophilus (strain HTA426).